The following is a 318-amino-acid chain: tRNA dimethylallyltransferase (318 aa).

21-28 provides a ligand contact to ATP; the sequence is GPTATGKS. 23-28 is a substrate binding site; sequence TATGKS. Residues 46–49 form an interaction with substrate tRNA region; it reads DSMQ.

It belongs to the IPP transferase family. In terms of assembly, monomer. Requires Mg(2+) as cofactor.

It carries out the reaction adenosine(37) in tRNA + dimethylallyl diphosphate = N(6)-dimethylallyladenosine(37) in tRNA + diphosphate. In terms of biological role, catalyzes the transfer of a dimethylallyl group onto the adenine at position 37 in tRNAs that read codons beginning with uridine, leading to the formation of N6-(dimethylallyl)adenosine (i(6)A). The chain is tRNA dimethylallyltransferase from Acidothermus cellulolyticus (strain ATCC 43068 / DSM 8971 / 11B).